Here is a 486-residue protein sequence, read N- to C-terminus: Cardiolipin synthase A (486 aa).

The next 2 membrane-spanning stretches (helical) occupy residues 3–23 and 38–58; these read TFYT…IAGV and MTWL…YFAF. 2 PLD phosphodiesterase domains span residues 219-246 and 399-426; these read MDLR…VDPR and EDGL…DMRS. Active-site residues include His-224, Lys-226, Asp-231, His-404, Lys-406, and Asp-411.

The protein belongs to the phospholipase D family. Cardiolipin synthase subfamily. ClsA sub-subfamily.

The protein localises to the cell inner membrane. It catalyses the reaction 2 a 1,2-diacyl-sn-glycero-3-phospho-(1'-sn-glycerol) = a cardiolipin + glycerol. In terms of biological role, catalyzes the reversible phosphatidyl group transfer from one phosphatidylglycerol molecule to another to form cardiolipin (CL) (diphosphatidylglycerol) and glycerol. The protein is Cardiolipin synthase A of Proteus mirabilis (strain HI4320).